The sequence spans 176 residues: MSSKQEPVILGKLGSSFGIKGWLKITTYTDSVEGIFDYSPWLIKEQGEWREVKVAQWRFQGKAVVACLEGVTTRDEAQALTNCEIAVPAEQMQDLPEDEFYWRDLIGCEVINTKGYNMGTVQEIVETGSNDVLLVKANAKDGFGKAERMIPFVTDQFIQKVDLAAKQILVDWDPDF.

Positions 97–176 (EDEFYWRDLI…QILVDWDPDF (80 aa)) constitute a PRC barrel domain.

This sequence belongs to the RimM family. In terms of assembly, binds ribosomal protein uS19.

The protein resides in the cytoplasm. Its function is as follows. An accessory protein needed during the final step in the assembly of 30S ribosomal subunit, possibly for assembly of the head region. Essential for efficient processing of 16S rRNA. May be needed both before and after RbfA during the maturation of 16S rRNA. It has affinity for free ribosomal 30S subunits but not for 70S ribosomes. The protein is Ribosome maturation factor RimM of Shewanella halifaxensis (strain HAW-EB4).